The primary structure comprises 113 residues: Death-associated protein-like 1.S (113 aa).

A disordered region spans residues 1–53; it reads MTKELKVQSSPQALKAGHLPAVKAGGMRVSKKQGNDENSAPEKNAKKTLQEKP.

This sequence belongs to the DAP-DAPL1 family. As to quaternary structure, associates with ribosomes; preventing translation. Interacts with eiF5a (eif5a and eif5a2); preventing translation.

Functionally, ribosome-binding protein that promotes ribosome hibernation, a process during which ribosomes are stabilized in an inactive state and preserved from proteasomal degradation. Acts via its association with eiF5a (eif5a and eif5a2) at the polypeptide exit tunnel of the ribosome, preventing mRNA translation. Plays a key role in ribosome hibernation in the mature egg by preventing mRNA translation, leading to ribosome inactivation. Ribosomes, which are produced in large quantities during oogenesis, are stored and translationally repressed in the egg and early embryo. This is Death-associated protein-like 1.S (dapl1.S) from Xenopus laevis (African clawed frog).